The sequence spans 312 residues: Methionyl-tRNA formyltransferase (312 aa).

Residue 109 to 112 (SLLP) participates in (6S)-5,6,7,8-tetrahydrofolate binding.

The protein belongs to the Fmt family.

The catalysed reaction is L-methionyl-tRNA(fMet) + (6R)-10-formyltetrahydrofolate = N-formyl-L-methionyl-tRNA(fMet) + (6S)-5,6,7,8-tetrahydrofolate + H(+). In terms of biological role, attaches a formyl group to the free amino group of methionyl-tRNA(fMet). The formyl group appears to play a dual role in the initiator identity of N-formylmethionyl-tRNA by promoting its recognition by IF2 and preventing the misappropriation of this tRNA by the elongation apparatus. The protein is Methionyl-tRNA formyltransferase of Caulobacter sp. (strain K31).